A 162-amino-acid chain; its full sequence is Caveolin-2 (162 aa).

Over 1–86 the chain is Cytoplasmic; the sequence is MGLETEKADV…FEISKYVLYK (86 aa). Position 19 is a phosphotyrosine; by SRC (Y19). Phosphoserine occurs at positions 20 and 23. An intramembrane region (helical) is located at residues 87-107; it reads FLTVFLAIPLAFAAGVLFAVL. Residues 108–162 lie on the Cytoplasmic side of the membrane; that stretch reads SCLHIWILMPFVKTCLMVLPSVQTIWRSVTDVVIAPLCASIGRSFSSVGLQLSHD.

The protein belongs to the caveolin family. Monomer or homodimer. Interacts with CAV1; the interaction forms a stable heterooligomeric complex that is required for targeting to lipid rafts and for caveolae formation. Tyrosine phosphorylated forms do not form heterooligomers with the Tyr-19-phosphorylated form existing as a monomer or dimer. Interacts (tyrosine phosphorylated form) with the SH2 domain-containing proteins, RASA1, NCK1 and SRC. Interacts (tyrosine phosphorylated form) with INSR. Interacts (Tyr-19 phosphorylated form) with MAPK1 (phosphorylated form); the interaction, promoted by insulin, leads to nuclear location and MAPK1 activation. Interacts with STAT3; the interaction is increased on insulin-induced tyrosine phosphorylation leading to STAT activation. In terms of processing, phosphorylated on serine and tyrosine residues. CAV1 promotes phosphorylation on Ser-23 which then targets the complex to the plasma membrane, lipid rafts and caveolae. Phosphorylation on Tyr-19 is required for insulin-induced phosphorylation of MAPK1 and DNA binding of STAT3. Tyrosine phosphorylation is induced by both EGF and insulin.

The protein resides in the nucleus. Its subcellular location is the cytoplasm. It localises to the golgi apparatus membrane. It is found in the cell membrane. The protein localises to the membrane. The protein resides in the caveola. In terms of biological role, may act as a scaffolding protein within caveolar membranes. Interacts directly with G-protein alpha subunits and can functionally regulate their activity. Acts as an accessory protein in conjunction with CAV1 in targeting to lipid rafts and driving caveolae formation. Positive regulator of cellular mitogenesis of the MAPK signaling pathway. Required for the insulin-stimulated nuclear translocation and activation of MAPK1 and STAT3, and the subsequent regulation of cell cycle progression. The polypeptide is Caveolin-2 (CAV2) (Oryctolagus cuniculus (Rabbit)).